The following is a 462-amino-acid chain: Na(+)/H(+) antiporter NhaA 2 (462 aa).

Residues 1–31 (MKSSTREQTPVTSPTPHDPTPPTPPRGSTPL) are disordered. A compositionally biased stretch (pro residues) spans 16–27 (PHDPTPPTPPRG). 11 helical membrane-spanning segments follow: residues 52–72 (IGGALLLLGTVVALVWANSPW), 96–116 (LTLGQWAADGLLAIFFFIAGL), 134–154 (LVPVAAAVGGMAVPAVVYVLV), 165–185 (GWAIPTATDIAFAVAVLAVIS), 195–215 (FLLTLAVVDDLLAITIIAIFY), 218–238 (TLAVLPLLGALAVIAVFGLLV), 244–264 (SWWLLIPLAVVAWALMHASGI), 309–329 (FAVPVFAFFSAGVTVGGLSGL), 337–357 (VALGIVAGLVVGKAAGILGAT), 382–402 (LLGGIGFTVSLLIGELAFGAG), and 408–428 (HVKVGVLTGSLLAAALAAVVL).

This sequence belongs to the NhaA Na(+)/H(+) (TC 2.A.33) antiporter family.

It localises to the cell membrane. The catalysed reaction is Na(+)(in) + 2 H(+)(out) = Na(+)(out) + 2 H(+)(in). In terms of biological role, na(+)/H(+) antiporter that extrudes sodium in exchange for external protons. The protein is Na(+)/H(+) antiporter NhaA 2 of Kineococcus radiotolerans (strain ATCC BAA-149 / DSM 14245 / SRS30216).